Here is a 184-residue protein sequence, read N- to C-terminus: ATP synthase subunit b, chloroplastic (184 aa).

Residues 27-49 form a helical membrane-spanning segment; it reads LATNLINLSVVLGVLIFFGKGVL.

Belongs to the ATPase B chain family. In terms of assembly, F-type ATPases have 2 components, F(1) - the catalytic core - and F(0) - the membrane proton channel. F(1) has five subunits: alpha(3), beta(3), gamma(1), delta(1), epsilon(1). F(0) has four main subunits: a(1), b(1), b'(1) and c(10-14). The alpha and beta chains form an alternating ring which encloses part of the gamma chain. F(1) is attached to F(0) by a central stalk formed by the gamma and epsilon chains, while a peripheral stalk is formed by the delta, b and b' chains.

It localises to the plastid. The protein resides in the chloroplast thylakoid membrane. F(1)F(0) ATP synthase produces ATP from ADP in the presence of a proton or sodium gradient. F-type ATPases consist of two structural domains, F(1) containing the extramembraneous catalytic core and F(0) containing the membrane proton channel, linked together by a central stalk and a peripheral stalk. During catalysis, ATP synthesis in the catalytic domain of F(1) is coupled via a rotary mechanism of the central stalk subunits to proton translocation. In terms of biological role, component of the F(0) channel, it forms part of the peripheral stalk, linking F(1) to F(0). The sequence is that of ATP synthase subunit b, chloroplastic from Manihot esculenta (Cassava).